Here is a 552-residue protein sequence, read N- to C-terminus: Keratin, type II cytoskeletal 6A (552 aa).

Residues 1 to 14 (MSTKTVIRSQTSHR) show a composition bias toward polar residues. The tract at residues 1–21 (MSTKTVIRSQTSHRGFSAGSA) is disordered. Positions 1–151 (MSTKTVIRSQ…DPTIQRVRTE (151 aa)) are head. Positions 152–187 (EREQIKTLNNKFASFIDKVRFLEQQNKVLDTKWALL) are coil 1A. Residues 152–465 (EREQIKTLNN…TLLEGEECRL (314 aa)) form the IF rod domain. The tract at residues 188-206 (QEQGTKTVRQGLETLFEQY) is linker 1. Positions 207-298 (INDLRKELDN…ALYEAELSQM (92 aa)) are coil 1B. A linker 12 region spans residues 299–322 (QTHISDTSVVLSMDNNRSLDLDSI). The interval 323-461 (IAEVKAQYEE…ATYRTLLEGE (139 aa)) is coil 2. The tract at residues 462–552 (ECRLNGEGVG…TSSTRKSYRP (91 aa)) is tail. The segment at 524–552 (ISSGLSSSGGSSSTIKYTTTSSTRKSYRP) is disordered. The segment covering 525–552 (SSGLSSSGGSSSTIKYTTTSSTRKSYRP) has biased composition (low complexity).

The protein belongs to the intermediate filament family. Heterodimer of a type I and a type II keratin. KRT6 isomers associate with KRT16 and/or KRT17. Interacts with TCHP.

Its function is as follows. Epidermis-specific type I keratin involved in wound healing. Involved in the activation of follicular keratinocytes after wounding, while it does not play a major role in keratinocyte proliferation or migration. Participates in the regulation of epithelial migration by inhibiting the activity of SRC during wound repair. The sequence is that of Keratin, type II cytoskeletal 6A (Krt6a) from Rattus norvegicus (Rat).